The sequence spans 529 residues: ADP,ATP carrier protein 1 (529 aa).

12 consecutive transmembrane segments (helical) span residues 24 to 44 (LKKV…YTIL), 63 to 83 (IPFI…LIYA), 93 to 113 (ALFY…PLVI), 124 to 144 (DFAD…IAML), 149 to 169 (FAAF…LMFW), 184 to 204 (FYAL…PAIV), 220 to 240 (WGVT…IIAA), 284 to 304 (YMLL…LVEV), 322 to 342 (AFMG…MLFI), 356 to 376 (ALVT…LVIF), 381 to 401 (TGLV…VGAV), and 463 to 483 (ISAM…VWLT). A compositionally biased stretch (low complexity) spans 509–520 (AAEKEASPAAKE). The tract at residues 509-529 (AAEKEASPAAKEVSPAIEGVS) is disordered.

This sequence belongs to the ADP/ATP translocase tlc family.

The protein localises to the cell membrane. In Chlamydia muridarum (strain MoPn / Nigg), this protein is ADP,ATP carrier protein 1 (tlcA).